Consider the following 407-residue polypeptide: MRQLLPGDTVWRNIRLATMDPQQQALYGLVDNQALIVREGHICDIVPETQLPVSGDNIHDMQGRLVTPGLIDCHTHLVFAGNRAAEWEQRLNGASYQHISAQGGGINATVSATRACAEETLYLLARERMMRLASEGVTLLEIKSGYGLELATEEKLLRVAAKLAAENAIDISPTLLAAHATPAEYRDDPDGYITLVCETMIPQLWQKGLFDAVDLFCESVGFNVAQSERVLQTAKALGIPVKGHVEQLSLLGGAQLVSRYQGLSADHIEYLDEVGVAAMRDGGTVGVLLPGAFYFLRETQRPPVELLRRYQVPVAVASDFNPGTSPFCSLHLAMNMACVQFGLTPEEAWAGVTRHAARALGRQATHGQIRAGYRADFVVWDAEQPVEIVYEPGRNPLYQRVYRGQIS.

Histidine 74 and histidine 76 together coordinate Fe(3+). Residues histidine 74 and histidine 76 each coordinate Zn(2+). Residues arginine 83, tyrosine 146, and histidine 179 each coordinate 4-imidazolone-5-propanoate. Residue tyrosine 146 participates in N-formimidoyl-L-glutamate binding. Residue histidine 244 coordinates Fe(3+). Zn(2+) is bound at residue histidine 244. Glutamine 247 is a binding site for 4-imidazolone-5-propanoate. Aspartate 319 is a Fe(3+) binding site. Residue aspartate 319 coordinates Zn(2+). N-formimidoyl-L-glutamate contacts are provided by asparagine 321 and glycine 323. Threonine 324 contacts 4-imidazolone-5-propanoate.

The protein belongs to the metallo-dependent hydrolases superfamily. HutI family. The cofactor is Zn(2+). Requires Fe(3+) as cofactor.

Its subcellular location is the cytoplasm. It carries out the reaction 4-imidazolone-5-propanoate + H2O = N-formimidoyl-L-glutamate. It participates in amino-acid degradation; L-histidine degradation into L-glutamate; N-formimidoyl-L-glutamate from L-histidine: step 3/3. Catalyzes the hydrolytic cleavage of the carbon-nitrogen bond in imidazolone-5-propanoate to yield N-formimidoyl-L-glutamate. It is the third step in the universal histidine degradation pathway. This is Imidazolonepropionase from Salmonella heidelberg (strain SL476).